Here is a 4062-residue protein sequence, read N- to C-terminus: Transcription-associated protein 1 (4062 aa).

The tract at residues 531 to 562 (LASEPSTSEDADESGGDPNKLPPPTKEGKKTS) is disordered. TPR repeat units lie at residues 1346–1379 (LDGVQNYMFNCPDGFDFEKDMDMYKRYLSHLLDI) and 1677–1714 (RRSFIRRIIVYQSSGPLRQEFMDTPEYFEKLIDLDDEE). The segment covering 2659–2670 (VETEMKREEPEP) has biased composition (basic and acidic residues). The segment at 2659-2692 (VETEMKREEPEPMEVDEKDSQDDSKDAGEPKEKE) is disordered. The span at 2671-2680 (MEVDEKDSQD) shows a compositional bias: acidic residues. A compositionally biased stretch (basic and acidic residues) spans 2681–2692 (DSKDAGEPKEKE). Residues 2800–3411 (LIEFISSKHE…FYHIREAVSV (612 aa)) enclose the FAT domain. Residues 2847–2880 (IETLESLGTLYNEISEFDQFAAIWERRAVFPDTM) form a TPR 3 repeat. The PI3K/PI4K catalytic domain maps to 3682 to 4046 (EPNFEIVIKG…DCVSLISRAK (365 aa)). Residues 3688-3694 (VIKGGQV) form a G-loop region. The interval 3902–3910 (NLTPMGPDQ) is catalytic loop. The tract at residues 3922–3950 (NPSYRFEIRGGRSLHDIQHFGHEVPFRLT) is activation loop. The FATC domain maps to 4031–4062 (AKLRKDDCVSLISRAKDSDNLARMPPTYHAWF).

Belongs to the PI3/PI4-kinase family. TRA1 subfamily. In terms of assembly, interacts with histone acetyltransferase Tip60 homolog mys-1. Probably a component of a complex with histone acetyltransferase (HAT) activity, at least composed of mys-1 and trr-1. In terms of tissue distribution, expressed in germ cells and somatic cells.

Its subcellular location is the nucleus. The protein resides in the chromosome. In terms of biological role, influences germ cell fate in hermaphrodites. Acts downstream of tra-2 and tra-3 and through the Tip60 histone acetyltransferase complex to regulate germ cell fate decisions. Required for spermatogenesis and embryonic development. Acts with tra-2 to promote expression of fog-3 and control male tail development. Involved in the negative regulation of vulval development. Involved in the positive regulation of transcription factor daf-16, probably acting by histone acetylation; thereby modulating stress resistance. Plays a role in acetylation of nucleosomal histone H4, probably acting as a component of the Tip60 histone acetyltransferase complex. The polypeptide is Transcription-associated protein 1 (Caenorhabditis elegans).